Consider the following 58-residue polypeptide: Ribosome biogenesis protein Nop10 (58 aa).

The protein belongs to the NOP10 family.

Its function is as follows. Involved in ribosome biogenesis; more specifically in 18S rRNA pseudouridylation and in cleavage of pre-rRNA. The sequence is that of Ribosome biogenesis protein Nop10 from Methanobrevibacter smithii (strain ATCC 35061 / DSM 861 / OCM 144 / PS).